The following is a 120-amino-acid chain: Large ribosomal subunit protein bL17 (120 aa).

Belongs to the bacterial ribosomal protein bL17 family. Part of the 50S ribosomal subunit. Contacts protein L32.

The chain is Large ribosomal subunit protein bL17 from Bacillus subtilis (strain 168).